Consider the following 354-residue polypeptide: Phospho-N-acetylmuramoyl-pentapeptide-transferase (354 aa).

The next 10 helical transmembrane spans lie at 23–43, 66–86, 88–108, 130–150, 161–181, 193–213, 230–250, 257–277, 282–302, and 331–351; these read FSFF…IAWA, TPTM…LLCA, LDNV…ALGF, LAVQ…HGEL, FALL…IVAA, GLAS…AYIC, VGET…FLWF, VFMG…MGVM, ILLI…ILQV, and KIIV…LTAL.

This sequence belongs to the glycosyltransferase 4 family. MraY subfamily. Mg(2+) is required as a cofactor.

It is found in the cell inner membrane. It carries out the reaction UDP-N-acetyl-alpha-D-muramoyl-L-alanyl-gamma-D-glutamyl-meso-2,6-diaminopimeloyl-D-alanyl-D-alanine + di-trans,octa-cis-undecaprenyl phosphate = di-trans,octa-cis-undecaprenyl diphospho-N-acetyl-alpha-D-muramoyl-L-alanyl-D-glutamyl-meso-2,6-diaminopimeloyl-D-alanyl-D-alanine + UMP. Its pathway is cell wall biogenesis; peptidoglycan biosynthesis. Catalyzes the initial step of the lipid cycle reactions in the biosynthesis of the cell wall peptidoglycan: transfers peptidoglycan precursor phospho-MurNAc-pentapeptide from UDP-MurNAc-pentapeptide onto the lipid carrier undecaprenyl phosphate, yielding undecaprenyl-pyrophosphoryl-MurNAc-pentapeptide, known as lipid I. The chain is Phospho-N-acetylmuramoyl-pentapeptide-transferase from Campylobacter curvus (strain 525.92).